The primary structure comprises 54 residues: Large ribosomal subunit protein bL33 (54 aa).

Belongs to the bacterial ribosomal protein bL33 family.

The polypeptide is Large ribosomal subunit protein bL33 (Stenotrophomonas maltophilia (strain K279a)).